Consider the following 534-residue polypeptide: Calmodulin calcium-dependent NAD kinase (534 aa).

The tract at residues 167 to 196 (QKVPKLKDFVMAATRKQRFERVTKDLKVKR) is calmodulin-binding. 238–245 (GGMGAGKS) is a binding site for ATP.

In terms of assembly, interacts with calmodulin (CaM) in a calcium Ca(2+)-dependent manner in vitro. Ca(2+) is required as a cofactor.

It is found in the mitochondrion outer membrane. It catalyses the reaction NAD(+) + ATP = ADP + NADP(+) + H(+). Its function is as follows. Phosphorylates NAD(+) to produce NADP(+) in a calmodulin calcium-dependent manner. Does not possess activity toward NADH. Has broad specificity for the phosphoryl donor, as ATP, CTP, GTP and UTP can be used interchangeably and produce similar efficiencies. May play a role in producing NADP(H) needed to regulate the elicitor-induced reactive oxygen species (ROS) burst by sustaining the activity of NADPH oxidases. Does not seem to play a role in photosynthesis-driven growth. This Arabidopsis thaliana (Mouse-ear cress) protein is Calmodulin calcium-dependent NAD kinase.